Consider the following 510-residue polypeptide: Mitochondrial metal transporter 1 (510 aa).

Residues 120-141 form a disordered region; sequence ADKPSSLNLHSHTHSHGHTHSH. A compositionally biased stretch (basic residues) spans 130–141; that stretch reads SHTHSHGHTHSH. Transmembrane regions (helical) follow at residues 165 to 185, 194 to 214, 241 to 261, 286 to 306, 333 to 353, and 356 to 376; these read WVGL…GIVF, AIHA…VGLA, LAMA…GPVI, VTDI…EWIF, LTSL…IQSL, and IGGL…MCIA.

The protein belongs to the cation diffusion facilitator (CDF) transporter (TC 2.A.4) family. SLC30A subfamily.

Its subcellular location is the mitochondrion membrane. Its function is as follows. Mitochondrial metal transporter involved in mitochondrial iron accumulation. The sequence is that of Mitochondrial metal transporter 1 (MMT1) from Saccharomyces cerevisiae (strain ATCC 204508 / S288c) (Baker's yeast).